The primary structure comprises 81 residues: Photosystem I iron-sulfur center (81 aa).

4Fe-4S ferredoxin-type domains are found at residues 2 to 31 (SHSV…MIPW) and 39 to 68 (IASA…VRVY). 8 residues coordinate [4Fe-4S] cluster: Cys-11, Cys-14, Cys-17, Cys-21, Cys-48, Cys-51, Cys-54, and Cys-58.

As to quaternary structure, the eukaryotic PSI reaction center is composed of at least 11 subunits. The cofactor is [4Fe-4S] cluster.

Its subcellular location is the plastid. The protein localises to the chloroplast thylakoid membrane. The enzyme catalyses reduced [plastocyanin] + hnu + oxidized [2Fe-2S]-[ferredoxin] = oxidized [plastocyanin] + reduced [2Fe-2S]-[ferredoxin]. In terms of biological role, apoprotein for the two 4Fe-4S centers FA and FB of photosystem I (PSI); essential for photochemical activity. FB is the terminal electron acceptor of PSI, donating electrons to ferredoxin. The C-terminus interacts with PsaA/B/D and helps assemble the protein into the PSI complex. Required for binding of PsaD and PsaE to PSI. PSI is a plastocyanin-ferredoxin oxidoreductase, converting photonic excitation into a charge separation, which transfers an electron from the donor P700 chlorophyll pair to the spectroscopically characterized acceptors A0, A1, FX, FA and FB in turn. The sequence is that of Photosystem I iron-sulfur center from Helianthus annuus (Common sunflower).